Reading from the N-terminus, the 422-residue chain is PHAF1 protein T01G9.2 (422 aa).

The protein belongs to the PHAF1 family.

It localises to the cytoplasm. Its subcellular location is the preautophagosomal structure. May play a regulatory role in autophagic activity. The polypeptide is PHAF1 protein T01G9.2 (Caenorhabditis elegans).